Consider the following 430-residue polypeptide: Enolase (430 aa).

A (2R)-2-phosphoglycerate-binding site is contributed by Gln-168. The active-site Proton donor is the Glu-210. Mg(2+) is bound by residues Asp-247, Glu-288, and Asp-315. (2R)-2-phosphoglycerate-binding residues include Lys-340, Arg-369, Ser-370, and Lys-391. Lys-340 functions as the Proton acceptor in the catalytic mechanism.

This sequence belongs to the enolase family. Mg(2+) serves as cofactor.

The protein localises to the cytoplasm. It localises to the secreted. The protein resides in the cell surface. It carries out the reaction (2R)-2-phosphoglycerate = phosphoenolpyruvate + H2O. It participates in carbohydrate degradation; glycolysis; pyruvate from D-glyceraldehyde 3-phosphate: step 4/5. Functionally, catalyzes the reversible conversion of 2-phosphoglycerate (2-PG) into phosphoenolpyruvate (PEP). It is essential for the degradation of carbohydrates via glycolysis. This Picosynechococcus sp. (strain ATCC 27264 / PCC 7002 / PR-6) (Agmenellum quadruplicatum) protein is Enolase.